The following is a 116-amino-acid chain: Large ribosomal subunit protein uL18 (116 aa).

It belongs to the universal ribosomal protein uL18 family. In terms of assembly, part of the 50S ribosomal subunit; part of the 5S rRNA/L5/L18/L25 subcomplex. Contacts the 5S and 23S rRNAs.

Functionally, this is one of the proteins that bind and probably mediate the attachment of the 5S RNA into the large ribosomal subunit, where it forms part of the central protuberance. The polypeptide is Large ribosomal subunit protein uL18 (Pseudomonas putida (strain W619)).